A 354-amino-acid chain; its full sequence is Guanine nucleotide-binding protein subunit alpha-14 (354 aa).

One can recognise a G-alpha domain in the interval 33-354; that stretch reads RELKLLLLGT…QLNLREFNLV (322 aa). The G1 motif stretch occupies residues 36–49; sequence KLLLLGTGESGKST. GTP-binding positions include 41-48, 175-181, 200-204, 269-272, and A326; these read GTGESGKS, LRVRVPT, DVGGQ, and NKKD. Residues S48 and T181 each coordinate Mg(2+). Residues 173–181 form a G2 motif region; the sequence is DVLRVRVPT. The tract at residues 196–205 is G3 motif; sequence FRMVDVGGQR. The interval 265 to 272 is G4 motif; sequence ILFLNKKD. The G5 motif stretch occupies residues 324–329; that stretch reads TCATDT.

The protein belongs to the G-alpha family. G(q) subfamily. As to quaternary structure, g proteins are composed of 3 units; alpha, beta and gamma. The alpha chain contains the guanine nucleotide binding site.

Guanine nucleotide-binding proteins (G proteins) are involved as modulators or transducers in various transmembrane signaling systems. Acts as an activator of phospholipase C. Mediates responses to trypsin. This chain is Guanine nucleotide-binding protein subunit alpha-14 (gna14), found in Xenopus laevis (African clawed frog).